Reading from the N-terminus, the 427-residue chain is Serine hydroxymethyltransferase (427 aa).

(6S)-5,6,7,8-tetrahydrofolate contacts are provided by residues Leu-124 and 128 to 130 (GHL). N6-(pyridoxal phosphate)lysine is present on Lys-233.

Belongs to the SHMT family. As to quaternary structure, homodimer. Pyridoxal 5'-phosphate is required as a cofactor.

It is found in the cytoplasm. The enzyme catalyses (6R)-5,10-methylene-5,6,7,8-tetrahydrofolate + glycine + H2O = (6S)-5,6,7,8-tetrahydrofolate + L-serine. It participates in one-carbon metabolism; tetrahydrofolate interconversion. It functions in the pathway amino-acid biosynthesis; glycine biosynthesis; glycine from L-serine: step 1/1. Functionally, catalyzes the reversible interconversion of serine and glycine with tetrahydrofolate (THF) serving as the one-carbon carrier. This reaction serves as the major source of one-carbon groups required for the biosynthesis of purines, thymidylate, methionine, and other important biomolecules. Also exhibits THF-independent aldolase activity toward beta-hydroxyamino acids, producing glycine and aldehydes, via a retro-aldol mechanism. The chain is Serine hydroxymethyltransferase from Paracoccus denitrificans (strain Pd 1222).